The primary structure comprises 279 residues: Cell division protein FtsQ (279 aa).

The segment at Met1–Asp28 is disordered. Topologically, residues Met1–Arg48 are cytoplasmic. A helical transmembrane segment spans residues Val49–Gly69. Over Val70–Gly279 the chain is Periplasmic. Positions Arg75–Glu144 constitute a POTRA domain.

It belongs to the FtsQ/DivIB family. FtsQ subfamily. Part of a complex composed of FtsB, FtsL and FtsQ.

The protein localises to the cell inner membrane. Its function is as follows. Essential cell division protein. May link together the upstream cell division proteins, which are predominantly cytoplasmic, with the downstream cell division proteins, which are predominantly periplasmic. May control correct divisome assembly. The polypeptide is Cell division protein FtsQ (Hahella chejuensis (strain KCTC 2396)).